Consider the following 185-residue polypeptide: Dihydrofolate reductase 1 (185 aa).

The region spanning 8–185 is the DHFR domain; sequence ELVLVVAADE…QASPRPLDDL (178 aa).

Belongs to the dihydrofolate reductase family.

The enzyme catalyses (6S)-5,6,7,8-tetrahydrofolate + NADP(+) = 7,8-dihydrofolate + NADPH + H(+). It functions in the pathway cofactor biosynthesis; tetrahydrofolate biosynthesis; 5,6,7,8-tetrahydrofolate from 7,8-dihydrofolate: step 1/1. Its function is as follows. Key enzyme in folate metabolism. Catalyzes an essential reaction for de novo glycine and purine synthesis, and for DNA precursor synthesis. The chain is Dihydrofolate reductase 1 (folA1) from Haloarcula marismortui (strain ATCC 43049 / DSM 3752 / JCM 8966 / VKM B-1809) (Halobacterium marismortui).